Here is a 317-residue protein sequence, read N- to C-terminus: Protoheme IX farnesyltransferase (317 aa).

9 consecutive transmembrane segments (helical) span residues 39–58, 62–84, 100–120, 123–143, 160–180, 184–204, 233–253, 256–276, and 293–313; these read VMSL…PGSL, LGAI…NMWY, IPAG…LAVG, LVMW…AIFF, IVIG…AVTG, LMPV…FWSL, IMAY…LGDT, VYGL…WRVL, and ARAA…ALAV.

This sequence belongs to the UbiA prenyltransferase family. Protoheme IX farnesyltransferase subfamily.

The protein localises to the cell inner membrane. It catalyses the reaction heme b + (2E,6E)-farnesyl diphosphate + H2O = Fe(II)-heme o + diphosphate. It functions in the pathway porphyrin-containing compound metabolism; heme O biosynthesis; heme O from protoheme: step 1/1. In terms of biological role, converts heme B (protoheme IX) to heme O by substitution of the vinyl group on carbon 2 of heme B porphyrin ring with a hydroxyethyl farnesyl side group. The polypeptide is Protoheme IX farnesyltransferase (Granulibacter bethesdensis (strain ATCC BAA-1260 / CGDNIH1)).